The following is a 223-amino-acid chain: Probable cytokinin riboside 5'-monophosphate phosphoribohydrolase LOGL1 (223 aa).

Residues glutamate 89, 107–108 (RK), 124–130 (GYGTMEE), and threonine 136 each bind substrate. The segment at 201-223 (QEVAPRTSWEMSELGYGKTPEES) is disordered.

This sequence belongs to the LOG family. In terms of tissue distribution, expressed in shoot apex, immature inflorescences and flowers.

The catalysed reaction is N(6)-(dimethylallyl)adenosine 5'-phosphate + H2O = N(6)-dimethylallyladenine + D-ribose 5-phosphate. It carries out the reaction 9-ribosyl-trans-zeatin 5'-phosphate + H2O = trans-zeatin + D-ribose 5-phosphate. Its function is as follows. Cytokinin-activating enzyme working in the direct activation pathway. Phosphoribohydrolase that converts inactive cytokinin nucleotides to the biologically active free-base forms. The chain is Probable cytokinin riboside 5'-monophosphate phosphoribohydrolase LOGL1 (LOGL1) from Oryza sativa subsp. japonica (Rice).